Reading from the N-terminus, the 109-residue chain is Small serum protein 2 (109 aa).

An N-terminal signal peptide occupies residues Met1–Gly19. 5 disulfides stabilise this stretch: Cys21/Cys72, Cys39/Cys64, Cys59/Cys93, Cys62/Cys71, and Cys84/Cys107.

In terms of assembly, forms a stable, non-covalent complex with serotriflin.

It localises to the secreted. Functionally, may serve as a self-defense protein against the toxic effects of the snake venom during accidental envenomation. Does not show inhibitory activity towards brevilysin H6. The sequence is that of Small serum protein 2 from Protobothrops flavoviridis (Habu).